A 342-amino-acid chain; its full sequence is tRNA (guanine(26)-N(2))-dimethyltransferase (342 aa).

Residues 1-336 (MRITEGSAVI…CPYAEVSEIL (336 aa)) enclose the Trm1 methyltransferase domain. Residues arginine 35, arginine 60, and glutamate 76 each coordinate S-adenosyl-L-methionine.

The protein belongs to the class I-like SAM-binding methyltransferase superfamily. Trm1 family.

It catalyses the reaction guanosine(26) in tRNA + 2 S-adenosyl-L-methionine = N(2)-dimethylguanosine(26) in tRNA + 2 S-adenosyl-L-homocysteine + 2 H(+). Its function is as follows. Dimethylates a single guanine residue at position 26 of a number of tRNAs using S-adenosyl-L-methionine as donor of the methyl groups. This Thermoplasma volcanium (strain ATCC 51530 / DSM 4299 / JCM 9571 / NBRC 15438 / GSS1) protein is tRNA (guanine(26)-N(2))-dimethyltransferase.